The primary structure comprises 67 residues: Large ribosomal subunit protein uL30 (67 aa).

It belongs to the universal ribosomal protein uL30 family. Part of the 50S ribosomal subunit.

In Thermotoga neapolitana (strain ATCC 49049 / DSM 4359 / NBRC 107923 / NS-E), this protein is Large ribosomal subunit protein uL30.